We begin with the raw amino-acid sequence, 151 residues long: Putative pre-16S rRNA nuclease (151 aa).

This sequence belongs to the YqgF nuclease family.

It is found in the cytoplasm. Functionally, could be a nuclease involved in processing of the 5'-end of pre-16S rRNA. This Bifidobacterium adolescentis (strain ATCC 15703 / DSM 20083 / NCTC 11814 / E194a) protein is Putative pre-16S rRNA nuclease.